The primary structure comprises 341 residues: Putative methyltransferase YGR283C (341 aa).

It belongs to the class IV-like SAM-binding methyltransferase superfamily.

Its subcellular location is the nucleus. It localises to the nucleolus. This is Putative methyltransferase YGR283C from Saccharomyces cerevisiae (strain ATCC 204508 / S288c) (Baker's yeast).